The chain runs to 600 residues: Probable tripeptidyl-peptidase SED4 (600 aa).

Positions 1 to 22 (MVSFTLRAIGACLIGLPALITA) are cleaved as a signal peptide. Residues 23 to 202 (APTSHVSNDF…SVFTSDLEIT (180 aa)) constitute a propeptide, removed in mature form. Asn-210 and Asn-281 each carry an N-linked (GlcNAc...) asparagine glycan. A Peptidase S53 domain is found at 212–600 (TITPDCIREL…FEKLSKLVLI (389 aa)). Catalysis depends on charge relay system residues Glu-288 and Asp-292. N-linked (GlcNAc...) asparagine glycans are attached at residues Asn-323 and Asn-404. Catalysis depends on Ser-504, which acts as the Charge relay system. Residues Asp-546 and Ile-547 each coordinate Ca(2+). Residue Asn-575 is glycosylated (N-linked (GlcNAc...) asparagine). Positions 579 and 581 each coordinate Ca(2+).

It depends on Ca(2+) as a cofactor.

It is found in the secreted. Its subcellular location is the extracellular space. It catalyses the reaction Release of an N-terminal tripeptide from a polypeptide.. Functionally, secreted tripeptidyl-peptidase which degrades proteins at acidic pHs and is involved in virulence. In Arthroderma benhamiae (strain ATCC MYA-4681 / CBS 112371) (Trichophyton mentagrophytes), this protein is Probable tripeptidyl-peptidase SED4 (SED4).